The chain runs to 297 residues: N-acetylmuramic acid 6-phosphate etherase (297 aa).

Positions Ala-55–Lys-218 constitute an SIS domain. The active-site Proton donor is the Glu-83. Glu-114 is an active-site residue.

This sequence belongs to the GCKR-like family. MurNAc-6-P etherase subfamily. As to quaternary structure, homodimer.

The enzyme catalyses N-acetyl-D-muramate 6-phosphate + H2O = N-acetyl-D-glucosamine 6-phosphate + (R)-lactate. Its pathway is amino-sugar metabolism; 1,6-anhydro-N-acetylmuramate degradation. The protein operates within amino-sugar metabolism; N-acetylmuramate degradation. It functions in the pathway cell wall biogenesis; peptidoglycan recycling. Its function is as follows. Specifically catalyzes the cleavage of the D-lactyl ether substituent of MurNAc 6-phosphate, producing GlcNAc 6-phosphate and D-lactate. Together with AnmK, is also required for the utilization of anhydro-N-acetylmuramic acid (anhMurNAc) either imported from the medium or derived from its own cell wall murein, and thus plays a role in cell wall recycling. The polypeptide is N-acetylmuramic acid 6-phosphate etherase (Salmonella dublin (strain CT_02021853)).